Here is a 236-residue protein sequence, read N- to C-terminus: MYSVLLNPSNTEIYSFLTDRIYRELIVIFATCKVNYKGRAESVASESPRLIILKPDGTVIIHESVKREPLNWQPPGTKIEIMNDYPLKIVAQRNRPKEVIEIDLKEVFYITSAEVKEGDFTIKGREIDIVNTIIQNPSMIEEGFVPLTREYNTPYGKIDLIGLDKKGNFVIIEVKRSKAQLNAISQLYRYYLHMREIKGDKIRGILVAPDLTIHARELLQKLGLEFIRYDIKNYSS.

It belongs to the NucS endonuclease family.

It is found in the cytoplasm. Its function is as follows. Cleaves both 3' and 5' ssDNA extremities of branched DNA structures. The polypeptide is Endonuclease NucS (Saccharolobus solfataricus (strain ATCC 35092 / DSM 1617 / JCM 11322 / P2) (Sulfolobus solfataricus)).